A 328-amino-acid chain; its full sequence is MASSTSTTTSKEIDRELPPLLRVYKDGTVERFLGSSFVPPSPEDPETGVSTKDIVISENPTISARVYLPKLNNTTEKLPILVYYHGGAFCLESAFSFLHQRYLNIVASKANVLVVSIEYRLAPEHPLPAAYEDGWYALKWVTSHSTNNNKPTNADPWLIKHGDFNRFYIGGDTSGANIAHNAALRVGAEALPGGLRIAGVLSAFPLFWGSKPVLSEPVEGHEKSSPMQVWNFVYPDAPGGIDNPLINPLAPGAPNLATLGCPKMLVFVAGKDDLRDRGIWYYEAVKESGWKGDVELAQYEGEEHCFQIYHPETENSKDLIGRIASFLV.

The short motif at 85-87 (HGG) is the Involved in the stabilization of the negatively charged intermediate by the formation of the oxyanion hole element. Catalysis depends on residues T173, D272, and H304.

It belongs to the 'GDXG' lipolytic enzyme family.

It catalyses the reaction (2R,3S)-2,4',7-trihydroxyisoflavanone = daidzein + H2O + H(+). The catalysed reaction is 2-hydroxy-2,3-dihydrogenistein = genistein + H2O + H(+). The enzyme catalyses a carboxylic ester + H2O = an alcohol + a carboxylate + H(+). It participates in secondary metabolite biosynthesis; flavonoid biosynthesis. Functionally, dehydratase that mediates the biosynthesis of isoflavonoids. Can better use 2,7-dihydroxy-4'-methoxyisoflavanone as substrate. Has also a slight carboxylesterase activity toward p-nitrophenyl butyrate. This is 2-hydroxyisoflavanone dehydratase (HIDM) from Glycyrrhiza echinata (Licorice).